Here is a 701-residue protein sequence, read N- to C-terminus: Polyribonucleotide nucleotidyltransferase (701 aa).

Positions 487 and 493 each coordinate Mg(2+). The region spanning 554–613 is the KH domain; the sequence is PTMIAMKIDTDKIRDVIGKGGATIRAICEETKASIDIEDDGSIKIFGESKEAAEAARQRV. An S1 motif domain is found at 623–691; it reads GKIYIGKVER…NRGRIKLSIK (69 aa).

It belongs to the polyribonucleotide nucleotidyltransferase family. In terms of assembly, component of the RNA degradosome, which is a multiprotein complex involved in RNA processing and mRNA degradation. Mg(2+) is required as a cofactor.

It is found in the cytoplasm. The catalysed reaction is RNA(n+1) + phosphate = RNA(n) + a ribonucleoside 5'-diphosphate. In terms of biological role, involved in mRNA degradation. Catalyzes the phosphorolysis of single-stranded polyribonucleotides processively in the 3'- to 5'-direction. This Pseudomonas syringae pv. syringae (strain B728a) protein is Polyribonucleotide nucleotidyltransferase.